The sequence spans 156 residues: Rhombotin-1 (156 aa).

LIM zinc-binding domains follow at residues lysine 22–threonine 84 and glycine 86–asparagine 148.

In terms of tissue distribution, expressed in the brain and not in the thymus.

The protein localises to the nucleus. In terms of biological role, may be involved in gene regulation within neural lineage cells potentially by direct DNA binding or by binding to other transcription factors. The polypeptide is Rhombotin-1 (LMO1) (Bos taurus (Bovine)).